Here is a 547-residue protein sequence, read N- to C-terminus: Glucose-6-phosphate isomerase (547 aa).

The active-site Proton donor is the Glu-351. Active-site residues include His-382 and Lys-510.

The protein belongs to the GPI family.

The protein localises to the cytoplasm. It catalyses the reaction alpha-D-glucose 6-phosphate = beta-D-fructose 6-phosphate. It functions in the pathway carbohydrate biosynthesis; gluconeogenesis. The protein operates within carbohydrate degradation; glycolysis; D-glyceraldehyde 3-phosphate and glycerone phosphate from D-glucose: step 2/4. Functionally, catalyzes the reversible isomerization of glucose-6-phosphate to fructose-6-phosphate. In Saccharophagus degradans (strain 2-40 / ATCC 43961 / DSM 17024), this protein is Glucose-6-phosphate isomerase.